The following is a 164-amino-acid chain: Protein-export protein SecB (164 aa).

Belongs to the SecB family. Homotetramer, a dimer of dimers. One homotetramer interacts with 1 SecA dimer.

It is found in the cytoplasm. Functionally, one of the proteins required for the normal export of preproteins out of the cell cytoplasm. It is a molecular chaperone that binds to a subset of precursor proteins, maintaining them in a translocation-competent state. It also specifically binds to its receptor SecA. This is Protein-export protein SecB from Orientia tsutsugamushi (strain Ikeda) (Rickettsia tsutsugamushi).